A 97-amino-acid polypeptide reads, in one-letter code: Kininogen-1 (97 aa).

An N-terminal signal peptide occupies residues 1–23 (MRLWFCLSFLIILCVEHFPGTLA).

The protein belongs to the bradykinin-related peptide family. As to expression, expressed by the skin glands.

Its subcellular location is the secreted. In terms of biological role, [Ala3,Thr6]bradykinin: produces in vitro relaxation of rat arterial smooth muscle and constriction of intestinal smooth muscle. Possesses insulin-releasing activity. May target bradykinin receptors (BDKRB). In Bombina variegata (Yellow-bellied toad), this protein is Kininogen-1.